Reading from the N-terminus, the 359-residue chain is Protein-L-isoaspartate O-methyltransferase domain-containing protein 2 (359 aa).

Gly-2 is lipidated: N-myristoyl glycine. Ser-64 is an active-site residue. AdoMet binding motif regions lie at residues 85-94, 160-164, and 181-191; these read LNLGSGTGYL, YDRVY, and LKVGGILVMPL. The tract at residues 240–250 is BC-box; sequence VRSLQDLARLA. Residues 301–328 form a disordered region; the sequence is SNPSDDTSCEDAEEDRREVAERTLQETK. Residues 314–328 are compositionally biased toward basic and acidic residues; the sequence is EDRREVAERTLQETK. A CUL-box region spans residues 343 to 346; that stretch reads LPLP.

The protein belongs to the methyltransferase superfamily. L-isoaspartyl/D-aspartyl protein methyltransferase family.

It is found in the cytoplasm. Functionally, may act as a substrate recognition component of an ECS (Elongin BC-CUL5-SOCS-box protein) E3 ubiquitin ligase complex which mediates the ubiquitination and subsequent proteasomal degradation of target proteins. May bind to the methyltransferase cofactor S-adenosylmethionine (AdoMet) via the N-terminal AdoMet binding motif, but probably does not display methyltransferase activity. This is Protein-L-isoaspartate O-methyltransferase domain-containing protein 2 (Pcmtd2) from Mus musculus (Mouse).